Reading from the N-terminus, the 431-residue chain is Levansucrase Lscbeta (431 aa).

Sucrose is bound by residues Trp-61, Asp-62, Ala-148, Arg-218, and Asp-219. Residue Asp-62 is the Nucleophile of the active site. The active-site Proton donor/acceptor is Glu-303.

Belongs to the glycosyl hydrolase 68 family. Homodimer.

It carries out the reaction [6)-beta-D-fructofuranosyl-(2-&gt;](n) alpha-D-glucopyranoside + sucrose = [6)-beta-D-fructofuranosyl-(2-&gt;](n+1) alpha-D-glucopyranoside + D-glucose. Sucrose hydrolase activity is negatively affected by salt concentration. The levan polymerization rate is constant regardless of sucrose concentration. Catalyzes the synthesis of levan, a fructose polymer, by transferring the fructosyl moiety from sucrose to a growing acceptor molecule. Also displays sucrose hydrolase activity. This chain is Levansucrase Lscbeta, found in Pseudomonas syringae pv. actinidiae.